Here is a 186-residue protein sequence, read N- to C-terminus: Allergen Fel d 4 (186 aa).

An N-terminal signal peptide occupies residues 1-15; the sequence is MKLLLLCLGLILVCA. 2 N-linked (GlcNAc...) asparagine glycosylation sites follow: asparagine 51 and asparagine 66. Cysteine 81 and cysteine 171 are joined by a disulfide.

This sequence belongs to the calycin superfamily. Lipocalin family. Abundant in urine (at protein level).

The protein localises to the secreted. Functionally, may be a pheromone carrier. Acts as a kairomone, detected by the prey vomeronasal organ and inducing fear reactions in mice. This chain is Allergen Fel d 4, found in Felis catus (Cat).